Consider the following 229-residue polypeptide: ADP-ribosylation factor-like protein 6-interacting protein 4 (229 aa).

Basic residues predominate over residues 1 to 20 (MAHVGSRKRSRSRSRSRSGR). Residues 1–152 (MAHVGSRKRS…EDNDGPVLTD (152 aa)) are disordered. The span at 21 to 35 (RGSEKRSKRSSKDAS) shows a compositional bias: basic and acidic residues. Positions 66 to 87 (SRSSSTSSSSSSSSSASSSSSS) are enriched in low complexity. Residues 90–117 (RKKRAKHKEKKRKKKKKKRKKKLKKRVK) are compositionally biased toward basic residues. Phosphoserine is present on residues S140 and S174. A Glycyl lysine isopeptide (Lys-Gly) (interchain with G-Cter in SUMO2) cross-link involves residue K191.

Belongs to the ARL6IP4 family. Interacts with ZCCHC17. Interacts with SRSF2. Interacts with ARL6. As to expression, widely expressed. Expressed at high level in testis and thymus.

The protein localises to the nucleus. The protein resides in the nucleolus. Its subcellular location is the nucleus speckle. Functionally, involved in modulating alternative pre-mRNA splicing with either 5' distal site activation or preferential use of 3' proximal site. The sequence is that of ADP-ribosylation factor-like protein 6-interacting protein 4 (Arl6ip4) from Mus musculus (Mouse).